The following is a 1341-amino-acid chain: Long tail fiber protein Gp37 (1341 aa).

The segment at 1238-1241 (NVYI) is interaction with the receptor-recognizing protein gp38. One can recognise a Peptidase S74 domain in the interval 1243 to 1340 (SDIRLKSNFK…ARVKELESKL (98 aa)).

It belongs to the S16-like long tail fiber protein Gp37 family. Homotrimer. Interacts with the receptor-recognizing protein Gp38. In terms of processing, proteolytic cleavage and release of the chaperone in the host cytosol stabilizes the folded protein.

It is found in the virion. In terms of biological role, constitues the trimeric tip of the long tail fiber that mediates the attachment to the host receptor, together with the receptor-recognizing protein Gp38. The C-terminal chaperone protein mediates homotrimerization and proper folding of the catalytic trimer. This is Long tail fiber protein Gp37 (37) from Escherichia coli (Bacteriophage T2).